Consider the following 92-residue polypeptide: Small ribosomal subunit protein uS19 (92 aa).

It belongs to the universal ribosomal protein uS19 family.

In terms of biological role, protein S19 forms a complex with S13 that binds strongly to the 16S ribosomal RNA. The protein is Small ribosomal subunit protein uS19 of Albidiferax ferrireducens (strain ATCC BAA-621 / DSM 15236 / T118) (Rhodoferax ferrireducens).